Consider the following 371-residue polypeptide: MAGKRDYYEILGVEKGADQDTIKKAYRKLAMQFHPDKNPGNKEAEEKFKEAAGAYEVLSDAQKRAQYDRFGHDAFTRGGGGGGFTDAEDIFSHFGDIFGDFFGGGMGGQQRQRRNRNEPRRGSDLRYVTEITLKDVITGIEKEIEFDTDKNCDECKGTGAEKGSQVSTCGTCGGSGQVVRQQGFFAMASTCPTCHGQGTVIKNPCKPCKGKGRVAEHRKIRLNIPAGVDTGTRLRVATEGEGGYMGGPPGDLYVEIRVKQHNNFERRNEDLFAELSLPYVQMLLGAEIEVPTVTGKAKLEVPKGTHHGDNVKLVGEGLPSLRGNRRGDIYFTVNVQFPEKLHKDEEKLLREIAKARGLNVTSEGGFFGKKK.

The region spanning Asp-6–Gly-71 is the J domain. The disordered stretch occupies residues Gly-104 to Ser-123. The CR-type zinc finger occupies Gly-139–His-217. Zn(2+) is bound by residues Cys-152, Cys-155, Cys-169, Cys-172, Cys-191, Cys-194, Cys-205, and Cys-208. 4 CXXCXGXG motif repeats span residues Cys-152–Gly-159, Cys-169–Gly-176, Cys-191–Gly-198, and Cys-205–Gly-212.

This sequence belongs to the DnaJ family. In terms of assembly, homodimer. The cofactor is Zn(2+).

The protein resides in the cytoplasm. In terms of biological role, participates actively in the response to hyperosmotic and heat shock by preventing the aggregation of stress-denatured proteins and by disaggregating proteins, also in an autonomous, DnaK-independent fashion. Unfolded proteins bind initially to DnaJ; upon interaction with the DnaJ-bound protein, DnaK hydrolyzes its bound ATP, resulting in the formation of a stable complex. GrpE releases ADP from DnaK; ATP binding to DnaK triggers the release of the substrate protein, thus completing the reaction cycle. Several rounds of ATP-dependent interactions between DnaJ, DnaK and GrpE are required for fully efficient folding. Also involved, together with DnaK and GrpE, in the DNA replication of plasmids through activation of initiation proteins. In Bdellovibrio bacteriovorus (strain ATCC 15356 / DSM 50701 / NCIMB 9529 / HD100), this protein is Chaperone protein DnaJ.